The primary structure comprises 498 residues: Acetyl-coenzyme A carboxylase carboxyl transferase subunit beta, chloroplastic (498 aa).

The tract at residues 36–59 (SVNEDPIINDMDKDIPSGSDSDNS) is disordered. Residues 231 to 498 (LWVQCENCYG…FFPLNQNSIK (268 aa)) form the CoA carboxyltransferase N-terminal domain. Zn(2+) is bound by residues Cys-235, Cys-238, Cys-254, and Cys-257. The segment at 235-257 (CENCYGLNYKRFLKSKMNICEHC) adopts a C4-type zinc-finger fold.

Belongs to the AccD/PCCB family. As to quaternary structure, acetyl-CoA carboxylase is a heterohexamer composed of biotin carboxyl carrier protein, biotin carboxylase and 2 subunits each of ACCase subunit alpha and ACCase plastid-coded subunit beta (accD). It depends on Zn(2+) as a cofactor.

It is found in the plastid. It localises to the chloroplast stroma. The catalysed reaction is N(6)-carboxybiotinyl-L-lysyl-[protein] + acetyl-CoA = N(6)-biotinyl-L-lysyl-[protein] + malonyl-CoA. The protein operates within lipid metabolism; malonyl-CoA biosynthesis; malonyl-CoA from acetyl-CoA: step 1/1. Functionally, component of the acetyl coenzyme A carboxylase (ACC) complex. Biotin carboxylase (BC) catalyzes the carboxylation of biotin on its carrier protein (BCCP) and then the CO(2) group is transferred by the transcarboxylase to acetyl-CoA to form malonyl-CoA. The sequence is that of Acetyl-coenzyme A carboxylase carboxyl transferase subunit beta, chloroplastic from Morus indica (Mulberry).